The sequence spans 700 residues: Calpain-2 catalytic subunit (700 aa).

At A2 the chain carries N-acetylalanine. A propeptide spans 2-19 (anchors to the small subunit); it reads AGIAMKLAKDREAAEGLG. The 300-residue stretch at 45–344 folds into the Calpain catalytic domain; the sequence is LFQDPSFPAL…YSRLEICNLT (300 aa). Ca(2+) is bound by residues I89, G91, and D96. Residue C105 is part of the active site. Ca(2+) is bound by residues E175, Q229, and K230. Residues H262 and N286 contribute to the active site. Ca(2+)-binding residues include E292, D299, Q319, and E323. Residues 345–514 are domain III; the sequence is PDTLTCDSYK…KKADYQTVDD (170 aa). The segment at 515-529 is linker; the sequence is EIEANIEEIEANEED. The domain IV stretch occupies residues 530–700; the sequence is IGDGFRRLFA…LISWLSFSVL (171 aa). 16 residues coordinate Ca(2+): A542, D545, E547, E552, D585, D587, S589, K591, E596, D615, D617, S619, T621, E626, D658, and N661. EF-hand domains follow at residues 572-605 and 602-637; these read FSIE…TKIQ and TKIQ…AGFK. Positions 667–700 constitute an EF-hand 3 domain; it reads VRLEILFKIFKQLDPENTGTIQLDLISWLSFSVL.

It belongs to the peptidase C2 family. As to quaternary structure, forms a heterodimer with a small (regulatory) subunit (CAPNS1). Interacts with CPEB3; this leads to cleavage of CPEB3. The cofactor is Ca(2+). As to expression, ubiquitous.

It localises to the cytoplasm. It is found in the cell membrane. It carries out the reaction Broad endopeptidase specificity.. Activated by 200-1000 micromolar concentrations of calcium and inhibited by calpastatin. Functionally, calcium-regulated non-lysosomal thiol-protease which catalyze limited proteolysis of substrates involved in cytoskeletal remodeling and signal transduction. Proteolytically cleaves MYOC at 'Arg-226'. Proteolytically cleaves CPEB3 following neuronal stimulation which abolishes CPEB3 translational repressor activity, leading to translation of CPEB3 target mRNAs. The chain is Calpain-2 catalytic subunit (Capn2) from Rattus norvegicus (Rat).